A 444-amino-acid chain; its full sequence is Tubulin beta chain (444 aa).

The GTP site is built by Gln-11, Glu-69, Ser-138, Gly-142, Thr-143, Gly-144, Asn-204, and Asn-226. Glu-69 is a binding site for Mg(2+).

The protein belongs to the tubulin family. As to quaternary structure, dimer of alpha and beta chains. A typical microtubule is a hollow water-filled tube with an outer diameter of 25 nm and an inner diameter of 15 nM. Alpha-beta heterodimers associate head-to-tail to form protofilaments running lengthwise along the microtubule wall with the beta-tubulin subunit facing the microtubule plus end conferring a structural polarity. Microtubules usually have 13 protofilaments but different protofilament numbers can be found in some organisms and specialized cells. Mg(2+) serves as cofactor.

It localises to the cytoplasm. Its subcellular location is the cytoskeleton. Its function is as follows. Tubulin is the major constituent of microtubules, a cylinder consisting of laterally associated linear protofilaments composed of alpha- and beta-tubulin heterodimers. Microtubules grow by the addition of GTP-tubulin dimers to the microtubule end, where a stabilizing cap forms. Below the cap, tubulin dimers are in GDP-bound state, owing to GTPase activity of alpha-tubulin. The chain is Tubulin beta chain from Trichuris trichiura (Whipworm).